The primary structure comprises 241 residues: tRNA (guanine-N(1)-)-methyltransferase (241 aa).

Residues Gly-123 and 143-148 (IGDYVL) each bind S-adenosyl-L-methionine.

Belongs to the RNA methyltransferase TrmD family. In terms of assembly, homodimer.

It is found in the cytoplasm. The catalysed reaction is guanosine(37) in tRNA + S-adenosyl-L-methionine = N(1)-methylguanosine(37) in tRNA + S-adenosyl-L-homocysteine + H(+). Functionally, specifically methylates guanosine-37 in various tRNAs. The polypeptide is tRNA (guanine-N(1)-)-methyltransferase (Roseobacter denitrificans (strain ATCC 33942 / OCh 114) (Erythrobacter sp. (strain OCh 114))).